Reading from the N-terminus, the 463-residue chain is L-seryl-tRNA(Sec) selenium transferase (463 aa).

N6-(pyridoxal phosphate)lysine is present on Lys-295.

This sequence belongs to the SelA family. In terms of assembly, homodecamer; pentamer of dimers. Binds only one seryl-tRNA(Sec) per dimer. Pyridoxal 5'-phosphate serves as cofactor.

The protein resides in the cytoplasm. It catalyses the reaction L-seryl-tRNA(Sec) + selenophosphate + H(+) = L-selenocysteinyl-tRNA(Sec) + phosphate. The protein operates within aminoacyl-tRNA biosynthesis; selenocysteinyl-tRNA(Sec) biosynthesis; selenocysteinyl-tRNA(Sec) from L-seryl-tRNA(Sec) (bacterial route): step 1/1. In terms of biological role, converts seryl-tRNA(Sec) to selenocysteinyl-tRNA(Sec) required for selenoprotein biosynthesis. The chain is L-seryl-tRNA(Sec) selenium transferase from Shigella flexneri.